A 182-amino-acid polypeptide reads, in one-letter code: ATP-dependent protease subunit HslV (182 aa).

Residue threonine 12 is part of the active site. Residues alanine 167, cysteine 170, and threonine 173 each contribute to the Na(+) site.

It belongs to the peptidase T1B family. HslV subfamily. A double ring-shaped homohexamer of HslV is capped on each side by a ring-shaped HslU homohexamer. The assembly of the HslU/HslV complex is dependent on binding of ATP.

It localises to the cytoplasm. It carries out the reaction ATP-dependent cleavage of peptide bonds with broad specificity.. With respect to regulation, allosterically activated by HslU binding. In terms of biological role, protease subunit of a proteasome-like degradation complex believed to be a general protein degrading machinery. This chain is ATP-dependent protease subunit HslV, found in Chlorobium luteolum (strain DSM 273 / BCRC 81028 / 2530) (Pelodictyon luteolum).